The chain runs to 356 residues: Glutamine synthetase root isozyme 3 (356 aa).

The 81-residue stretch at 19–99 folds into the GS beta-grasp domain; that stretch reads IIAEYIWIGG…VMCDCYTPAG (81 aa). The region spanning 106-356 is the GS catalytic domain; the sequence is KRYNAAKIFS…IAETTIIWKP (251 aa).

The protein belongs to the glutamine synthetase family. As to quaternary structure, homooctamer. Found in all the tissues examined with higher expression found in tissues of the root.

Its subcellular location is the cytoplasm. It catalyses the reaction L-glutamate + NH4(+) + ATP = L-glutamine + ADP + phosphate + H(+). Functionally, plays a role in the flow of nitrogen into nitrogenous organic compounds. This chain is Glutamine synthetase root isozyme 3 (GLN4), found in Zea mays (Maize).